Here is a 191-residue protein sequence, read N- to C-terminus: Thymidine kinase (191 aa).

Residues 15–22 and 88–91 contribute to the ATP site; these read GPMYSGKT and DEAQ. The active-site Proton acceptor is glutamate 89. The Zn(2+) site is built by cysteine 145, cysteine 148, cysteine 183, and cysteine 186.

This sequence belongs to the thymidine kinase family. As to quaternary structure, homotetramer.

It localises to the cytoplasm. It carries out the reaction thymidine + ATP = dTMP + ADP + H(+). The protein is Thymidine kinase of Clostridium botulinum (strain Kyoto / Type A2).